A 166-amino-acid chain; its full sequence is Peptidyl-prolyl cis-trans isomerase-like 1 (166 aa).

One can recognise a PPIase cyclophilin-type domain in the interval 10 to 164 (QPPNVYLETS…DDVKILKAYP (155 aa)). Residues 54–65 (HRIIKDFMIQGG), 70–71 (TG), 99–104 (AMANAG), 109–113 (GSQFF), T119, and K125 contribute to the cyclosporin A site. S149 carries the phosphoserine modification.

It belongs to the cyclophilin-type PPIase family. PPIL1 subfamily. As to quaternary structure, identified in the spliceosome C complex. Interacts with SNW1/SKIP. Interacts with CDC40/PRP17; this interaction leads to CDC40 isomerization. Interacts with RBM22.

It is found in the nucleus. It carries out the reaction [protein]-peptidylproline (omega=180) = [protein]-peptidylproline (omega=0). With respect to regulation, inhibited by Cyclosporin A. In terms of biological role, involved in pre-mRNA splicing as component of the spliceosome. PPIases accelerate the folding of proteins. It catalyzes the cis-trans isomerization of proline imidic peptide bonds in oligopeptides. Catalyzes prolyl peptide bond isomerization in CDC40/PRP17. Plays an important role in embryonic brain development; this function is independent of its isomerase activity. This Mus musculus (Mouse) protein is Peptidyl-prolyl cis-trans isomerase-like 1 (Ppil1).